The following is a 265-amino-acid chain: Glutamate racemase (265 aa).

Substrate is bound by residues 10–11 and 42–43; these read DS and YG. Catalysis depends on C73, which acts as the Proton donor/acceptor. 74–75 provides a ligand contact to substrate; that stretch reads NT. Residue C183 is the Proton donor/acceptor of the active site. Residue 184 to 185 participates in substrate binding; it reads TH.

The protein belongs to the aspartate/glutamate racemases family.

The enzyme catalyses L-glutamate = D-glutamate. It functions in the pathway cell wall biogenesis; peptidoglycan biosynthesis. In terms of biological role, provides the (R)-glutamate required for cell wall biosynthesis. The chain is Glutamate racemase from Corynebacterium diphtheriae (strain ATCC 700971 / NCTC 13129 / Biotype gravis).